Here is a 430-residue protein sequence, read N- to C-terminus: Enolase (430 aa).

Glutamine 167 is a (2R)-2-phosphoglycerate binding site. The active-site Proton donor is the glutamate 209. Aspartate 246, glutamate 287, and aspartate 314 together coordinate Mg(2+). The (2R)-2-phosphoglycerate site is built by lysine 339, arginine 368, and serine 369. Lysine 339 functions as the Proton acceptor in the catalytic mechanism.

It belongs to the enolase family. The cofactor is Mg(2+).

It localises to the cytoplasm. The protein resides in the secreted. Its subcellular location is the cell surface. It catalyses the reaction (2R)-2-phosphoglycerate = phosphoenolpyruvate + H2O. Its pathway is carbohydrate degradation; glycolysis; pyruvate from D-glyceraldehyde 3-phosphate: step 4/5. Catalyzes the reversible conversion of 2-phosphoglycerate (2-PG) into phosphoenolpyruvate (PEP). It is essential for the degradation of carbohydrates via glycolysis. This chain is Enolase, found in Synechococcus sp. (strain ATCC 27144 / PCC 6301 / SAUG 1402/1) (Anacystis nidulans).